The following is a 436-amino-acid chain: MEECDYINELPDSLLTQILLDLRTKDSVKTSVSSKRWRNLWLNVPGLDLFSLQFTNPHHEEGLIKFMDRFMESNCRSRLQKFMIRYFECNGYRDRFMELIGTVVDCGIQHLYVYMHTCNRVDFIRQNIYKSKTLVSLKLYNVELKNPDFVVSLPCLKILKLMKICYGEDGPLVVEKLISGCPVLEDLELIKPFDILTQDVILFLRVSSQTLKSLRLYFATNGSVEIDAPRLKYMTFYESRFDRIMVKNMSSLFSIEIRAKSSFEYGGLLKAEDPRKRAIICDFLTVISSVRHMIISGSILEELHSYSKLGWIPQFRNLYHLQASFFGTSLQLLPTFLESCPNLKNLIMDYGAFKEENIDFHEVPQCLISTLEYVHINKLMMMEQSGIKLVNYFIENSAVLKKLTLRFSFFSSIESESYKKLLTSTKLSPTCQVIFV.

In terms of domain architecture, F-box spans 4 to 50 (CDYINELPDSLLTQILLDLRTKDSVKTSVSSKRWRNLWLNVPGLDLF). LRR repeat units lie at residues 287-310 (ISSV…SKLG) and 397-420 (SAVL…SYKK). The FBD domain maps to 355 to 407 (EENIDFHEVPQCLISTLEYVHINKLMMMEQSGIKLVNYFIENSAVLKKLTLRF).

The polypeptide is Putative F-box/FBD/LRR-repeat protein At5g44960 (Arabidopsis thaliana (Mouse-ear cress)).